The sequence spans 89 residues: Small ribosomal subunit protein uS15 (89 aa).

The protein belongs to the universal ribosomal protein uS15 family. In terms of assembly, part of the 30S ribosomal subunit. Forms a bridge to the 50S subunit in the 70S ribosome, contacting the 23S rRNA.

In terms of biological role, one of the primary rRNA binding proteins, it binds directly to 16S rRNA where it helps nucleate assembly of the platform of the 30S subunit by binding and bridging several RNA helices of the 16S rRNA. Forms an intersubunit bridge (bridge B4) with the 23S rRNA of the 50S subunit in the ribosome. This is Small ribosomal subunit protein uS15 from Shewanella halifaxensis (strain HAW-EB4).